Consider the following 344-residue polypeptide: Thiamine thiazole synthase (344 aa).

Substrate contacts are provided by residues C90, 111 to 112 (EA), G119, and V184. C232 is subject to 2,3-didehydroalanine (Cys). Substrate is bound by residues D234, H249, M301, and 311–313 (RMG).

Belongs to the THI4 family. As to quaternary structure, homooctamer. Interacts with cyp-41. The cofactor is Fe cation. Post-translationally, during the catalytic reaction, a sulfide is transferred from Cys-232 to a reaction intermediate, generating a dehydroalanine residue.

It is found in the cytoplasm. It localises to the nucleus. The catalysed reaction is [ADP-thiazole synthase]-L-cysteine + glycine + NAD(+) = [ADP-thiazole synthase]-dehydroalanine + ADP-5-ethyl-4-methylthiazole-2-carboxylate + nicotinamide + 3 H2O + 2 H(+). Its function is as follows. Involved in biosynthesis of the thiamine precursor thiazole. Catalyzes the conversion of NAD and glycine to adenosine diphosphate 5-(2-hydroxyethyl)-4-methylthiazole-2-carboxylic acid (ADT), an adenylated thiazole intermediate. The reaction includes an iron-dependent sulfide transfer from a conserved cysteine residue of the protein to a thiazole intermediate. The enzyme can only undergo a single turnover, which suggests it is a suicide enzyme. May have additional roles in adaptation to various stress conditions and in DNA damage tolerance. This Neurospora crassa (strain ATCC 24698 / 74-OR23-1A / CBS 708.71 / DSM 1257 / FGSC 987) protein is Thiamine thiazole synthase.